We begin with the raw amino-acid sequence, 334 residues long: Protein-methionine-sulfoxide reductase catalytic subunit MsrP (334 aa).

A signal peptide (tat-type signal) is located at residues 1–44 (MKKNQFLKESDVTAESVFFMKRRQVLKALGISAAALSLPHAAHA). Mo-molybdopterin contacts are provided by residues N88, 91–92 (YE), C146, T181, N233, R238, and 249–251 (GIK).

The protein belongs to the MsrP family. As to quaternary structure, heterodimer of a catalytic subunit (MsrP) and a heme-binding subunit (MsrQ). The cofactor is Mo-molybdopterin. Predicted to be exported by the Tat system. The position of the signal peptide cleavage has not been experimentally proven.

Its subcellular location is the periplasm. It catalyses the reaction L-methionyl-[protein] + a quinone + H2O = L-methionyl-(S)-S-oxide-[protein] + a quinol. The enzyme catalyses L-methionyl-[protein] + a quinone + H2O = L-methionyl-(R)-S-oxide-[protein] + a quinol. Part of the MsrPQ system that repairs oxidized periplasmic proteins containing methionine sulfoxide residues (Met-O), using respiratory chain electrons. Thus protects these proteins from oxidative-stress damage caused by reactive species of oxygen and chlorine generated by the host defense mechanisms. MsrPQ is essential for the maintenance of envelope integrity under bleach stress, rescuing a wide series of structurally unrelated periplasmic proteins from methionine oxidation, including the primary periplasmic chaperone SurA and the lipoprotein Pal. The catalytic subunit MsrP is non-stereospecific, being able to reduce both (R-) and (S-) diastereoisomers of methionine sulfoxide. This is Protein-methionine-sulfoxide reductase catalytic subunit MsrP from Shigella sonnei (strain Ss046).